The following is a 116-amino-acid chain: Large ribosomal subunit protein bL20 (116 aa).

Belongs to the bacterial ribosomal protein bL20 family.

Binds directly to 23S ribosomal RNA and is necessary for the in vitro assembly process of the 50S ribosomal subunit. It is not involved in the protein synthesizing functions of that subunit. The chain is Large ribosomal subunit protein bL20 from Helicobacter pylori (strain HPAG1).